Consider the following 137-residue polypeptide: Glycine cleavage system H protein (137 aa).

The Lipoyl-binding domain maps to P36–E118. K77 carries the post-translational modification N6-lipoyllysine.

This sequence belongs to the GcvH family. The glycine cleavage system is composed of four proteins: P, T, L and H. It depends on (R)-lipoate as a cofactor.

The glycine cleavage system catalyzes the degradation of glycine. The H protein shuttles the methylamine group of glycine from the P protein to the T protein. This is Glycine cleavage system H protein from Bifidobacterium longum (strain NCC 2705).